Consider the following 284-residue polypeptide: Gigasin-3a (284 aa).

Positions 202 to 284 are disordered; it reads GLDNPLPNPR…FKAGRKNNRN (83 aa). A compositionally biased stretch (low complexity) spans 223-245; the sequence is SSPLPESTPKSSTKTSSASPIKS. Basic residues predominate over residues 246–257; that stretch reads RQGKKLRGKKQN. Polar residues predominate over residues 258–267; sequence KTGNTRFTYR. Residues 268–284 show a composition bias toward basic residues; the sequence is NNKRNIKFKAGRKNNRN.

Component of the organic matrix of calcified shell layers.

The protein is Gigasin-3a of Magallana gigas (Pacific oyster).